We begin with the raw amino-acid sequence, 462 residues long: MLLLARCLLLVLVSSLLVCSGLACGPGRGFGKRRHPKKLTPLAYKQFIPNVAEKTLGASGRYEGKISRNSERFKELTPNYNPDIIFKDEENTGADRLMTQRCKDKLNALAISVMNQWPGVKLRVTEGWDEDGHHSEESLHYEGRAVDITTSDRDRSKYGMLARLAVEAGFDWVYYESKAHIHCSVKAENSVAAKSGGCFPGSATVHLEQGGTKLVKDLSPGDRVLAADDQGRLLYSDFLTFLDRDDGAKKVFYVIETREPRERLLLTAAHLLFVAPHNDSATGEPEASSGSGPPSGGALGPRALFASRVRPGQRVYVVAERDGDRRLLPAAVHSVTLSEEAAGAYAPLTAQGTILINRVLASCYAVIEEHSWAHRAFAPFRLAHALLAALAPARTDRGGDSGGGDRGGGGGRVALTAPGAADAPGAGATAGIHWYSQLLYQIGTWLLDSEALHPLGMAVKSS.

The first 23 residues, 1 to 23 (MLLLARCLLLVLVSSLLVCSGLA), serve as a signal peptide directing secretion. Cys-24 is lipidated: N-palmitoyl cysteine. The Cardin-Weintraub signature appears at 32-38 (KRRHPKK). Residues Glu-89, Glu-90, Asp-95, Thr-125, Glu-126, Asp-129, and Asp-131 each contribute to the Ca(2+) site. 3 residues coordinate Zn(2+): His-140, Asp-147, and His-182. Gly-197 is lipidated: Cholesterol glycine ester. Asn-278 is a glycosylation site (N-linked (GlcNAc...) asparagine). 2 disordered regions span residues 279-302 (DSATGEPEASSGSGPPSGGALGPR) and 395-414 (TDRGGDSGGGDRGGGGGRVA). Over residues 283-292 (GEPEASSGSG) the composition is skewed to low complexity. Residues 400–412 (DSGGGDRGGGGGR) show a composition bias toward gly residues.

The protein belongs to the hedgehog family. Multimer. In terms of assembly, interacts with HHATL/GUP1 which negatively regulates HHAT-mediated palmitoylation of the SHH N-terminus. Interacts with BOC and CDON. Interacts with HHIP. Interacts with DISP1 via its cholesterol anchor. Interacts with SCUBE2. Interacts with glypican GPC3. In terms of processing, the C-terminal domain displays an autoproteolysis activity and a cholesterol transferase activity. Both activities result in the cleavage of the full-length protein and covalent attachment of a cholesterol moiety to the C-terminal of the newly generated N-terminal fragment (ShhN). Cholesterylation is required for the sonic hedgehog protein N-product targeting to lipid rafts and multimerization. ShhN is the active species in both local and long-range signaling, whereas the C-product (ShhC) is degraded in the endoplasmic reticulum. N-palmitoylation by HHAT of ShhN is required for sonic hedgehog protein N-product multimerization and full activity. It is a prerequisite for the membrane-proximal positioning and the subsequent shedding of this N-terminal peptide. Post-translationally, the lipidated N- and C-terminal peptides of ShhNp can be cleaved (shedding). The N-terminal palmitoylated peptide is cleaved at the Cardin-Weintraub (CW) motif site. The cleavage reduced the interactions with heparan sulfate. The cleavage is enhanced by SCUBE2.

The protein resides in the endoplasmic reticulum membrane. Its subcellular location is the golgi apparatus membrane. The protein localises to the secreted. It localises to the cell membrane. It catalyses the reaction glycyl-L-cysteinyl-[protein] + cholesterol + H(+) = [protein]-C-terminal glycyl cholesterol ester + N-terminal L-cysteinyl-[protein]. In terms of biological role, the C-terminal part of the sonic hedgehog protein precursor displays an autoproteolysis and a cholesterol transferase activity. Both activities result in the cleavage of the full-length protein into two parts (ShhN and ShhC) followed by the covalent attachment of a cholesterol moiety to the C-terminal of the newly generated ShhN. Both activities occur in the endoplasmic reticulum. Once cleaved, ShhC is degraded in the endoplasmic reticulum. Functionally, the dually lipidated sonic hedgehog protein N-product (ShhNp) is a morphogen which is essential for a variety of patterning events during development. Induces ventral cell fate in the neural tube and somites. Involved in the patterning of the anterior-posterior axis of the developing limb bud. Essential for axon guidance. Binds to the patched (PTCH1) receptor, which functions in association with smoothened (SMO), to activate the transcription of target genes. In the absence of SHH, PTCH1 represses the constitutive signaling activity of SMO. This Homo sapiens (Human) protein is Sonic hedgehog protein.